The sequence spans 158 residues: NAD(P)H-quinone oxidoreductase subunit J, chloroplastic (158 aa).

The protein belongs to the complex I 30 kDa subunit family. In terms of assembly, NDH is composed of at least 16 different subunits, 5 of which are encoded in the nucleus.

The protein resides in the plastid. It is found in the chloroplast thylakoid membrane. It catalyses the reaction a plastoquinone + NADH + (n+1) H(+)(in) = a plastoquinol + NAD(+) + n H(+)(out). It carries out the reaction a plastoquinone + NADPH + (n+1) H(+)(in) = a plastoquinol + NADP(+) + n H(+)(out). In terms of biological role, NDH shuttles electrons from NAD(P)H:plastoquinone, via FMN and iron-sulfur (Fe-S) centers, to quinones in the photosynthetic chain and possibly in a chloroplast respiratory chain. The immediate electron acceptor for the enzyme in this species is believed to be plastoquinone. Couples the redox reaction to proton translocation, and thus conserves the redox energy in a proton gradient. This is NAD(P)H-quinone oxidoreductase subunit J, chloroplastic from Lactuca sativa (Garden lettuce).